The primary structure comprises 236 residues: MDGAYGHVHNGSPMAVDGEESGAGTGTGAGADGLYPTSTDTAAHAVSLPRSVGDFAAVVRAVSAEAADALRSGAGPPAEAWPRVYRMFCDMFGRYAASPMPVFHSADPLRRAVGLYLVDLGAAPVETHAELSGRMLFCAYWCCLGHAFACSRPQMYERACARFFETRLGIGETPPADAERYWAALLNMAGAEPELFPRHAAAAAYLRARGRKLPLQLPSAHRTAKTVAVTGQSINF.

Residues 1–32 (MDGAYGHVHNGSPMAVDGEESGAGTGTGAGAD) are disordered. Residues 21 to 31 (SGAGTGTGAGA) are compositionally biased toward gly residues. Residues 138–150 (CAYWCCLGHAFAC) fold into a zinc finger.

It belongs to the herpesviridae US10 family. Phosphorylated.

The protein localises to the virion tegument. It is found in the host nucleus matrix. This Equine herpesvirus 1 (strain Kentucky A) (EHV-1) protein is Virion protein US10 homolog (IR5).